The chain runs to 464 residues: Dolichyl-diphosphooligosaccharide--protein glycosyltransferase subunit 1B (464 aa).

The signal sequence occupies residues 1–24; sequence MAARIGIFSVFVAVLLSISAFSSA. Residues 25 to 436 lie on the Lumenal side of the membrane; that stretch reads QDLQIVNAER…TFKPIYMLAE (412 aa). Residues asparagine 106 and asparagine 298 are each glycosylated (N-linked (GlcNAc...) asparagine). Residue lysine 310 forms a Glycyl lysine isopeptide (Lys-Gly) (interchain with G-Cter in ubiquitin) linkage. Asparagine 352 carries an N-linked (GlcNAc...) asparagine glycan. A helical membrane pass occupies residues 437-457; that stretch reads PFMLVSAFFLVFVASLAYVHI. The Cytoplasmic segment spans residues 458 to 464; that stretch reads DLNIVRK.

This sequence belongs to the OST1 family. As to quaternary structure, component of the oligosaccharyltransferase (OST) complex.

It is found in the endoplasmic reticulum membrane. It functions in the pathway protein modification; protein glycosylation. In terms of biological role, subunit of the oligosaccharyl transferase (OST) complex that catalyzes the initial transfer of a defined glycan (Glc(3)Man(9)GlcNAc(2) in eukaryotes) from the lipid carrier dolichol-pyrophosphate to an asparagine residue within an Asn-X-Ser/Thr consensus motif in nascent polypeptide chains, the first step in protein N-glycosylation. N-glycosylation occurs cotranslationally and the complex associates with the Sec61 complex at the channel-forming translocon complex that mediates protein translocation across the endoplasmic reticulum (ER). All subunits are required for a maximal enzyme activity. This chain is Dolichyl-diphosphooligosaccharide--protein glycosyltransferase subunit 1B (OST1B), found in Arabidopsis thaliana (Mouse-ear cress).